An 811-amino-acid chain; its full sequence is Endothelin-converting enzyme 2 (811 aa).

At 1 to 106 the chain is on the cytoplasmic side; the sequence is MNVALQELGA…QLLGSRTQLE (106 aa). The segment at 22–64 is disordered; that stretch reads LRDEDAPETPVEGGASPDAMEVGKGASPFSPGPSPGMTPGTPR. A helical; Signal-anchor for type II membrane protein transmembrane segment spans residues 107–127; the sequence is LVLAGASLLLAALLLGCLVAL. The Lumenal segment spans residues 128–811; that stretch reads GVQYHRDPSH…MNPGQLCEVW (684 aa). Positions 139-811 constitute a Peptidase M13 domain; sequence TCLTEACIRV…MNPGQLCEVW (673 aa). 5 cysteine pairs are disulfide-bonded: Cys140–Cys145, Cys163–Cys796, Cys171–Cys756, Cys227–Cys476, and Cys685–Cys808. 7 N-linked (GlcNAc...) asparagine glycosylation sites follow: Asn207, Asn211, Asn252, Asn312, Asn357, Asn424, and Asn580. Residue His648 participates in Zn(2+) binding. The active site involves Glu649. Residue His652 participates in Zn(2+) binding. Residues Asn673 and Asn681 are each glycosylated (N-linked (GlcNAc...) asparagine). Residue Glu708 coordinates Zn(2+). Asp712 (proton donor) is an active-site residue.

Belongs to the peptidase M13 family. It depends on Zn(2+) as a cofactor.

Its subcellular location is the golgi apparatus membrane. It localises to the cytoplasmic vesicle. The protein resides in the secretory vesicle membrane. It catalyses the reaction Hydrolysis of the 21-Trp-|-Val-22 bond in big endothelin to form endothelin 1.. Functionally, converts big endothelin-1 to endothelin-1. Also involved in the processing of various neuroendocrine peptides, including neurotensin, angiotensin I, substance P, proenkephalin-derived peptides, and prodynorphin-derived peptides. May play a role in amyloid-beta processing. This is Endothelin-converting enzyme 2 from Homo sapiens (Human).